The chain runs to 477 residues: Proline--tRNA ligase (477 aa).

Belongs to the class-II aminoacyl-tRNA synthetase family. ProS type 3 subfamily. In terms of assembly, homodimer.

It is found in the cytoplasm. It carries out the reaction tRNA(Pro) + L-proline + ATP = L-prolyl-tRNA(Pro) + AMP + diphosphate. In terms of biological role, catalyzes the attachment of proline to tRNA(Pro) in a two-step reaction: proline is first activated by ATP to form Pro-AMP and then transferred to the acceptor end of tRNA(Pro). The protein is Proline--tRNA ligase of Methanoculleus marisnigri (strain ATCC 35101 / DSM 1498 / JR1).